A 234-amino-acid chain; its full sequence is Large ribosomal subunit protein uL1 (234 aa).

This sequence belongs to the universal ribosomal protein uL1 family. Part of the 50S ribosomal subunit.

Binds directly to 23S rRNA. The L1 stalk is quite mobile in the ribosome, and is involved in E site tRNA release. In terms of biological role, protein L1 is also a translational repressor protein, it controls the translation of the L11 operon by binding to its mRNA. The protein is Large ribosomal subunit protein uL1 of Cronobacter sakazakii (strain ATCC BAA-894) (Enterobacter sakazakii).